We begin with the raw amino-acid sequence, 69 residues long: MMSKLGVLLTICLLLFPLSALPLDGDQPADQPAERMQDISPEQNPLFHPDKRGCCPFPACTTHIICRCC.

The first 20 residues, 1-20, serve as a signal peptide directing secretion; sequence MMSKLGVLLTICLLLFPLSA. Residues 21–52 constitute a propeptide that is removed on maturation; sequence LPLDGDQPADQPAERMQDISPEQNPLFHPDKR. 3 disulfide bridges follow: C54–C68, C55–C66, and C60–C69. A Cysteine amide modification is found at C69.

As to expression, expressed by the venom duct.

It is found in the secreted. The chain is Conotoxin reg3f from Conus regius (Crown cone).